The sequence spans 229 residues: MVQGVQLPVCLICGLYSQDIQKHRQGFPSSLKLSNGYILPEGKMTPNTLFVGGIDMKVDENEIREFFAKYGSVKEVKIITYRGGICKGYGFVYFSEDVDIQTIVDQPISFKGKKLKLGPAIMKERSSRSVSSPMIGPSQWVNPTPYMYCSCCPPGLAPPSPVFSGGNQYMQPYSYSSPPGIMVPQVPMNYAQTTYAYQYPLPQWCGEQRTRLVNQNFVDCGVQTLLTLM.

The RRM domain maps to 47-128 (NTLFVGGIDM…PAIMKERSSR (82 aa)). A DAZ domain is found at 172–198 (PYSYSSPPGIMVPQVPMNYAQTTYAYQ).

It belongs to the RRM DAZ family. In terms of tissue distribution, testis and ovary specific. In ovary, it is localized in the cortex of oocytes. At the onset of embryogenesis, maternal product is located at the vegetal pole, before migrating toward blastomeres through cytoplasmic streams as early embryogenesis proceededs.

It is found in the cytoplasm. RNA-binding protein involved in gametogenesis in both males and females. Acts by binding to the 3'-UTR of mRNA, specifically recognizing GUU triplets, and promoting the translation of key transcripts. Establishes oocyte polarity through interaction with Bucky ball (BUC). Interacts with Bucky ball (BUC) mRNA to mediate Balbiani body formation and oocyte polarity during early oogenesis. This Danio rerio (Zebrafish) protein is Deleted in azoospermia-like (dazl).